The primary structure comprises 440 residues: Chromosome partition protein MukF (440 aa).

The segment at 208-236 is leucine-zipper; the sequence is LSETSGTLRELQDTLEAAGDKLQANLLRI.

Belongs to the MukF family. As to quaternary structure, interacts, and probably forms a ternary complex, with MukE and MukB via its C-terminal region. The complex formation is stimulated by calcium or magnesium. It is required for an interaction between MukE and MukB.

It is found in the cytoplasm. The protein localises to the nucleoid. Involved in chromosome condensation, segregation and cell cycle progression. May participate in facilitating chromosome segregation by condensation DNA from both sides of a centrally located replisome during cell division. Not required for mini-F plasmid partitioning. Probably acts via its interaction with MukB and MukE. Overexpression results in anucleate cells. It has a calcium binding activity. The protein is Chromosome partition protein MukF of Escherichia coli O127:H6 (strain E2348/69 / EPEC).